We begin with the raw amino-acid sequence, 496 residues long: UDP-N-acetylmuramoyl-L-alanyl-D-glutamate--2,6-diaminopimelate ligase (496 aa).

Serine 32 is a UDP-N-acetyl-alpha-D-muramoyl-L-alanyl-D-glutamate binding site. Residue 116-122 coordinates ATP; that stretch reads GTNGKTT. Residues 158–159, serine 185, glutamine 191, and arginine 193 each bind UDP-N-acetyl-alpha-D-muramoyl-L-alanyl-D-glutamate; that span reads TT. Position 225 is an N6-carboxylysine (lysine 225). Residues arginine 389, 413-416, glycine 464, and glutamate 468 each bind meso-2,6-diaminopimelate; that span reads DNPR. The short motif at 413–416 is the Meso-diaminopimelate recognition motif element; the sequence is DNPR.

Belongs to the MurCDEF family. MurE subfamily. The cofactor is Mg(2+). In terms of processing, carboxylation is probably crucial for Mg(2+) binding and, consequently, for the gamma-phosphate positioning of ATP.

The protein localises to the cytoplasm. The catalysed reaction is UDP-N-acetyl-alpha-D-muramoyl-L-alanyl-D-glutamate + meso-2,6-diaminopimelate + ATP = UDP-N-acetyl-alpha-D-muramoyl-L-alanyl-gamma-D-glutamyl-meso-2,6-diaminopimelate + ADP + phosphate + H(+). The protein operates within cell wall biogenesis; peptidoglycan biosynthesis. Catalyzes the addition of meso-diaminopimelic acid to the nucleotide precursor UDP-N-acetylmuramoyl-L-alanyl-D-glutamate (UMAG) in the biosynthesis of bacterial cell-wall peptidoglycan. The chain is UDP-N-acetylmuramoyl-L-alanyl-D-glutamate--2,6-diaminopimelate ligase from Trichormus variabilis (strain ATCC 29413 / PCC 7937) (Anabaena variabilis).